The chain runs to 184 residues: Dual specificity protein phosphatase 22 (184 aa).

Gly-2 carries the N-myristoyl glycine lipid modification. In terms of domain architecture, Tyrosine-protein phosphatase spans 4 to 144 (GMNKILPGLY…LQEFEKHEVH (141 aa)). The residue at position 58 (Ser-58) is a Phosphoserine. The Phosphocysteine intermediate role is filled by Cys-88. A protein contacts are provided by Leu-89, Ala-90, Val-92, Ser-93, and Arg-94.

This sequence belongs to the protein-tyrosine phosphatase family. Non-receptor class dual specificity subfamily. As to quaternary structure, monomer. Interacts with LCK; the interaction is direct. Interacts with UBR2; the interaction is direct. In terms of processing, myristoylation regulates subcellular location, and is necessary for activation of JNK. In terms of tissue distribution, ubiquitous. Highest expression seen in heart, placenta, lung, liver, kidney and pancreas.

The protein localises to the cytoplasm. The enzyme catalyses O-phospho-L-tyrosyl-[protein] + H2O = L-tyrosyl-[protein] + phosphate. It carries out the reaction O-phospho-L-seryl-[protein] + H2O = L-seryl-[protein] + phosphate. The catalysed reaction is O-phospho-L-threonyl-[protein] + H2O = L-threonyl-[protein] + phosphate. Functionally, dual specificity phosphatase; can dephosphorylate both phosphotyrosine and phosphoserine or phosphothreonine residues. Activates the JNK signaling pathway. Inhibits T-cell receptor signaling and T-cell mediated immune responses, acting, at least in part, by inducing degradation of E3 ubiquitin ligase UBR2. Dephosphorylates and thereby induces 'Lys-48'-linked ubiquitination of UBR2, leading to proteasomal degradation of UBR2. Dephosphorylates and thereby inactivates tyrosine kinase LCK. Inhibits UBR2-mediated 'Lys-63'-linked ubiquitination of LCK. May play a role in B-cell receptor (BCR) signaling and B-cell function. The chain is Dual specificity protein phosphatase 22 (DUSP22) from Homo sapiens (Human).